A 285-amino-acid chain; its full sequence is GPN-loop GTPase 3 (285 aa).

13–18 is a binding site for GTP; sequence GSGKST. Positions 72-74 match the Gly-Pro-Asn (GPN)-loop; involved in dimer interface motif; it reads GPN. 174-177 is a GTP binding site; the sequence is TKMD. Residues 261-285 are disordered; it reads KEPKENEEDKSENFDEFFQDRADEP. A compositionally biased stretch (acidic residues) spans 265 to 277; sequence ENEEDKSENFDEF.

It belongs to the GPN-loop GTPase family. Heterodimer with gpn1. Binds to RNA polymerase II (RNAPII).

Its function is as follows. Small GTPase required for proper localization of RNA polymerase II (RNAPII). May act at an RNAP assembly step prior to nuclear import. The polypeptide is GPN-loop GTPase 3 (Xenopus tropicalis (Western clawed frog)).